We begin with the raw amino-acid sequence, 272 residues long: Interleukin-2 receptor subunit alpha (272 aa).

Positions 1–21 (MDPYLLMWGLLTFITVPGCQA) are cleaved as a signal peptide. Positions 22-84 (ELCDDDPPKI…SWDNQCQCTS (63 aa)) constitute a Sushi 1 domain. At 22-240 (ELCDDDPPKI…ETFIFTTEYQ (219 aa)) the chain is on the extracellular side. 3 cysteine pairs are disulfide-bonded: Cys24-Cys67, Cys49-Cys80, and Cys51-Cys82. N-linked (GlcNAc...) asparagine glycans are attached at residues Asn70 and Asn89. Over residues 87 to 98 (ARNTTKQVTPQP) the composition is skewed to polar residues. The tract at residues 87–109 (ARNTTKQVTPQPEEQKERKTTEM) is disordered. A Sushi 2 domain is found at 123–186 (GHCREPPPWE…WTQPQLICTG (64 aa)). Disulfide bonds link Cys125-Cys168 and Cys152-Cys184. Positions 186-213 (GETEPSQFPGEEEPQASPDGLPESETSR) are disordered. The chain crosses the membrane as a helical span at residues 241 to 259 (VAVAGCVFLLISVLLLSGL). Topologically, residues 260–272 (TWQRRQRKNRRTI) are cytoplasmic.

Non-covalent dimer of an alpha and a beta subunit. IL2R exists in 3 different forms: a high affinity dimer, an intermediate affinity monomer (beta subunit), and a low affinity monomer (alpha subunit). The high and intermediate affinity forms also associate with a gamma subunit.

Its subcellular location is the membrane. Functionally, receptor for interleukin-2. The receptor is involved in the regulation of immune tolerance by controlling regulatory T cells (TREGs) activity. TREGs suppress the activation and expansion of autoreactive T-cells. This chain is Interleukin-2 receptor subunit alpha (IL2RA), found in Macaca mulatta (Rhesus macaque).